The chain runs to 465 residues: Myosin-6 (465 aa).

Residues 1–35 enclose the Myosin motor domain; that stretch reads ILERGDALLVVQWNIRAFTGVKKWPWMELYFEIEP. Residues 36 to 465 adopt a coiled-coil conformation; sequence LLKSAEAEKE…YRRKLEEAQR (430 aa). Phosphoserine is present on residues serine 285 and serine 334. The residue at position 456 (tyrosine 456) is a Phosphotyrosine.

As to quaternary structure, muscle myosin is a hexameric protein that consists of 2 heavy chain subunits (MHC), 2 alkali light chain subunits (MLC) and 2 regulatory light chain subunits (MLC-2).

Its subcellular location is the cytoplasm. It is found in the myofibril. Muscle contraction. The polypeptide is Myosin-6 (MYH6) (Oryctolagus cuniculus (Rabbit)).